Here is a 62-residue protein sequence, read N- to C-terminus: Short neurotoxin 1 (62 aa).

Residues 1-17 (MQCCNQQSSQPKTTTTC) are compositionally biased toward polar residues. The segment at 1–20 (MQCCNQQSSQPKTTTTCPGG) is disordered. Intrachain disulfides connect cysteine 3–cysteine 24, cysteine 17–cysteine 41, cysteine 43–cysteine 54, and cysteine 55–cysteine 60.

Belongs to the three-finger toxin family. Short-chain subfamily. Type I alpha-neurotoxin sub-subfamily. Expressed by the venom gland.

Its subcellular location is the secreted. Its function is as follows. Binds to muscle nicotinic acetylcholine receptor (nAChR) and inhibit acetylcholine from binding to the receptor, thereby impairing neuromuscular transmission. The sequence is that of Short neurotoxin 1 from Acanthophis antarcticus (Common death adder).